Here is a 224-residue protein sequence, read N- to C-terminus: Histone H1.03 (224 aa).

2 stretches are compositionally biased toward low complexity: residues 1–22 (MAET…AKAA) and 30–42 (AAGG…PAGP). Disordered stretches follow at residues 1–43 (MAET…AGPS) and 99–224 (QTKG…PKKK). One can recognise an H15 domain in the interval 40 to 113 (AGPSVTELIT…GASGSFRLSK (74 aa)). Composition is skewed to basic residues over residues 122–137 (APKK…KPAA), 145–162 (KKPK…KAKK), 170–188 (KAAK…KKAV), and 197–224 (KAVK…PKKK).

The protein belongs to the histone H1/H5 family.

The protein resides in the nucleus. Its subcellular location is the chromosome. In terms of biological role, histones H1 are necessary for the condensation of nucleosome chains into higher-order structures. The chain is Histone H1.03 from Gallus gallus (Chicken).